The sequence spans 421 residues: 3-phosphoshikimate 1-carboxyvinyltransferase (421 aa).

The 3-phosphoshikimate site is built by Lys-19, Ser-20, and Arg-24. Lys-19 lines the phosphoenolpyruvate pocket. Residues Gly-88 and Arg-116 each contribute to the phosphoenolpyruvate site. 3-phosphoshikimate-binding residues include Ser-160, Gln-162, Asp-307, and Lys-334. Gln-162 serves as a coordination point for phosphoenolpyruvate. Asp-307 functions as the Proton acceptor in the catalytic mechanism. Residues Arg-338 and Arg-380 each coordinate phosphoenolpyruvate.

It belongs to the EPSP synthase family. Monomer.

It localises to the cytoplasm. It carries out the reaction 3-phosphoshikimate + phosphoenolpyruvate = 5-O-(1-carboxyvinyl)-3-phosphoshikimate + phosphate. The protein operates within metabolic intermediate biosynthesis; chorismate biosynthesis; chorismate from D-erythrose 4-phosphate and phosphoenolpyruvate: step 6/7. Functionally, catalyzes the transfer of the enolpyruvyl moiety of phosphoenolpyruvate (PEP) to the 5-hydroxyl of shikimate-3-phosphate (S3P) to produce enolpyruvyl shikimate-3-phosphate and inorganic phosphate. The polypeptide is 3-phosphoshikimate 1-carboxyvinyltransferase (Thermotoga neapolitana (strain ATCC 49049 / DSM 4359 / NBRC 107923 / NS-E)).